The following is a 637-amino-acid chain: Nuclear receptor subfamily 2 group C member 1-B (637 aa).

Positions 149–224 form a DNA-binding region, nuclear receptor; that stretch reads VELCVVCGDK…LGMKQDSVQC (76 aa). NR C4-type zinc fingers lie at residues 152–172 and 188–207; these read CVVC…CEGC and CRGS…CQYC. The 242-residue stretch at 383–624 folds into the NR LBD domain; that stretch reads CVGSGSNLLP…SIIPYILRME (242 aa).

The protein belongs to the nuclear hormone receptor family. NR2 subfamily.

The protein resides in the nucleus. Orphan nuclear receptor. Binds the IR7 element in the promoter of its own gene in an autoregulatory negative feedback mechanism. Primarily repressor of a broad range of genes. Binds to hormone response elements (HREs) consisting of two 5'-AGGTCA-3' half site direct repeat consensus sequences. This is Nuclear receptor subfamily 2 group C member 1-B (nr2c1-b) from Xenopus laevis (African clawed frog).